The primary structure comprises 354 residues: Protein RecA (354 aa).

67–74 serves as a coordination point for ATP; the sequence is GPESSGKT. Residues 331–354 form a disordered region; the sequence is GGANSSDSKTESDENIDLETGEVF. Residues 343 to 354 show a composition bias toward acidic residues; it reads DENIDLETGEVF.

The protein belongs to the RecA family.

It is found in the cytoplasm. Its function is as follows. Can catalyze the hydrolysis of ATP in the presence of single-stranded DNA, the ATP-dependent uptake of single-stranded DNA by duplex DNA, and the ATP-dependent hybridization of homologous single-stranded DNAs. It interacts with LexA causing its activation and leading to its autocatalytic cleavage. The sequence is that of Protein RecA from Shewanella frigidimarina (strain NCIMB 400).